Here is a 554-residue protein sequence, read N- to C-terminus: MVKVSLDNVKLLVDVDKEPFFKPSSTTVGDILTKDALEFIVLLHRTFNNKRKQLLENRQVVQKKLDSGSYHLDFLPETANIRNDPTWQGPILAPGLINRSTEITGPPLRNMLINALNAPVNTYMTDFEDSASPTWNNMVYGQVNLYDAIRNQIDFDTPRKSYKLNGNVANLPTIIVRPRGWHMVEKHLYVDDEPISASIFDFGLYFYHNAKELIKLGKGPYFYLPKMEHHLEAKLWNDVFCVAQDYIGIPRGTIRATVLIETLPAAFQMEEIIYQLRQHSSGLNCGRWDYIFSTIKRLRNDPNHILPNRNQVTMTSPFMDAYVKRLINTCHRRGVHAMGGMAAQIPIKDDPAANEKAMTKVRNDKIRELTNGHDGSWVAHPALAPICNEVFINMGTPNQIYFIPENVVTAANLLETKIPNGEITTEGIVQNLDIGLQYMEAWLRGSGCVPINNLMEDAATAEVSRCQLYQWVKHGVTLKDTGEKVTPELTEKILKEQVERLSKASPLGDKNKFALAAKYFLPEIRGEKFSEFLTTLLYDEIVSTKATPTDLSKL.

Arg177 acts as the Proton acceptor in catalysis. Asp457 functions as the Proton donor in the catalytic mechanism. The SKL peroxisome targeting motif motif lies at Ser552–Leu554.

Belongs to the malate synthase family. As to quaternary structure, interacts with PEX9.

Its subcellular location is the peroxisome matrix. It carries out the reaction glyoxylate + acetyl-CoA + H2O = (S)-malate + CoA + H(+). It participates in carbohydrate metabolism; glyoxylate cycle; (S)-malate from isocitrate: step 2/2. In terms of biological role, malate synthase which takes part in the glyoxylate cycle. MLS1 activity is essential for cells to grow on oleic acid as a sole carbon source. Two steps of the glyoxylate cycle take place in the cytosol, the splitting of isocitrate into succinate and glyoxylate, and the dehydrogenation of malate to oxaloacetate. However, the formation of malate from glyoxylate and acetyl-CoA undertaken MLS1, occurs in the peroxisomes when cells are grown on oleic acid. The source of acetyl-CoA being either peroxisomal when breaking down fatty acids, or cytosolic when extra-cellular two-carbon substrates are used, therefore, although not strictly essential, the peroxisomal localization of MLS1 appears to be advantageous for cells growing on oleic acid, in that acetyl-CoA production and utilization are thereby intimately compartmentalized together to increase efficiency. The sequence is that of Malate synthase 1 from Saccharomyces cerevisiae (strain ATCC 204508 / S288c) (Baker's yeast).